The chain runs to 863 residues: DNA replication licensing factor mcm4-B (863 aa).

The tract at residues 1-130 (MSSPTSTPSR…ARKVKQVDLH (130 aa)) is disordered. 2 stretches are compositionally biased toward polar residues: residues 54–64 (SPSGDVQSPSG) and 84–99 (LDLS…SSRV). A C4-type zinc finger spans residues 306-331 (CQVCAFTTRVEIDRGRIAEPSVCKHC). The MCM domain occupies 458–667 (IYERLAAALA…YDRRLAHHLV (210 aa)). ATP contacts are provided by Y471, R497, K516, S517, N618, R643, R732, and E735. The Arginine finger motif lies at 642–645 (SRFD).

It belongs to the MCM family. Component of the mcm2-7 complex (RLF-M). The complex forms a toroidal hexameric ring with the proposed subunit order mcm2-mcm6-mcm4-mcm7-mcm3-mcm5. The heterodimer of mmcm3/mcm5 interacts with mcm4, mmcm6, mcm7 and weakly with mcm2. Begins to associate with zmcm6 at the neurula stage. Component of the CMG helicase complex, composed of the mcm2-7 complex, the GINS complex and cdc45. In terms of processing, hyperphosphorylated during mitosis in a mechanism requiring cdc2-cyclin B and other kinases. Undergoes dephosphorylation after exiting mitosis, existing in a partially phosphorylated state in the cytosolic interphase mcm complex which associates with the pre-replication complexes (pre-Rcs). Complete dephosphorylation inactivates the mcm complex, preventing its binding to chromatin. Becomes actively phosphorylated during S phase once the mcm complex is assembled on the chromatin. This chromatin-associated phosphorylation occurs during the activation of the pre-Rcs and is independent of cdks. Phosphorylated by the cdc7-dbf4b complex.

Its subcellular location is the nucleus. It localises to the chromosome. It carries out the reaction ATP + H2O = ADP + phosphate + H(+). Its function is as follows. Acts as a component of the MCM2-7 complex (MCM complex) which is the replicative helicase essential for 'once per cell cycle' DNA replication initiation and elongation in eukaryotic cells. Core component of CDC45-MCM-GINS (CMG) helicase, the molecular machine that unwinds template DNA during replication, and around which the replisome is built. The active ATPase sites in the MCM2-7 ring are formed through the interaction surfaces of two neighboring subunits such that a critical structure of a conserved arginine finger motif is provided in trans relative to the ATP-binding site of the Walker A box of the adjacent subunit. The six ATPase active sites, however, are likely to contribute differentially to the complex helicase activity. The chain is DNA replication licensing factor mcm4-B (mcm4-b) from Xenopus laevis (African clawed frog).